We begin with the raw amino-acid sequence, 867 residues long: Valine--tRNA ligase (867 aa).

The 'HIGH' region motif lies at 42–52 (PNITGKIHMGH). The 'KMSKS' region motif lies at 521–525 (KMSKS). Position 524 (K524) interacts with ATP. Positions 794–867 (LGTLIDVKSE…QIISDLEAKA (74 aa)) form a coiled coil.

This sequence belongs to the class-I aminoacyl-tRNA synthetase family. ValS type 1 subfamily. Monomer.

The protein resides in the cytoplasm. It catalyses the reaction tRNA(Val) + L-valine + ATP = L-valyl-tRNA(Val) + AMP + diphosphate. Catalyzes the attachment of valine to tRNA(Val). As ValRS can inadvertently accommodate and process structurally similar amino acids such as threonine, to avoid such errors, it has a 'posttransfer' editing activity that hydrolyzes mischarged Thr-tRNA(Val) in a tRNA-dependent manner. The protein is Valine--tRNA ligase of Fervidobacterium nodosum (strain ATCC 35602 / DSM 5306 / Rt17-B1).